The following is a 257-amino-acid chain: Golgi SNAP receptor complex member 1-2 (257 aa).

Residues 1-235 (MTESSLDLQE…GSIKRKRSRD (235 aa)) lie on the Cytoplasmic side of the membrane. At asparagine 51 the chain carries Phosphoserine. Residues 113-147 (TQKLARHRDILHEYTQEFRRIKGNINSLREHAELL) adopt a coiled-coil conformation. The chain crosses the membrane as a helical; Anchor for type IV membrane protein span at residues 236-256 (TLILSAVIAACTLFLIIYWLS). A topological domain (vesicular) is located at residue lysine 257.

This sequence belongs to the GOSR1 family. In terms of assembly, component of several multiprotein Golgi SNARE complexes.

The protein localises to the golgi apparatus membrane. Its subcellular location is the endoplasmic reticulum membrane. Functionally, involved in transport from the ER to the Golgi apparatus as well as in intra-Golgi transport. It belongs to a super-family of proteins called t-SNAREs or soluble NSF (N-ethylmaleimide-sensitive factor) attachment protein receptor. The chain is Golgi SNAP receptor complex member 1-2 (GOS12) from Arabidopsis thaliana (Mouse-ear cress).